The primary structure comprises 363 residues: Flagellar P-ring protein (363 aa).

The signal sequence occupies residues 1–20; sequence MKYRLIVALAMLVLSLPSQA.

The protein belongs to the FlgI family. The basal body constitutes a major portion of the flagellar organelle and consists of four rings (L,P,S, and M) mounted on a central rod.

It localises to the periplasm. The protein resides in the bacterial flagellum basal body. Its function is as follows. Assembles around the rod to form the L-ring and probably protects the motor/basal body from shearing forces during rotation. This Shewanella sp. (strain ANA-3) protein is Flagellar P-ring protein.